The following is a 54-amino-acid chain: Ferredoxin (54 aa).

4Fe-4S ferredoxin-type domains are found at residues 2-28 (HVIS…EGET) and 29-54 (KYVV…ISAE). [4Fe-4S] cluster contacts are provided by Cys-8, Cys-11, Cys-14, Cys-18, Cys-36, Cys-39, Cys-42, and Cys-46.

[4Fe-4S] cluster is required as a cofactor.

In terms of biological role, ferredoxins are iron-sulfur proteins that transfer electrons in a wide variety of metabolic reactions. This chain is Ferredoxin, found in Megasphaera elsdenii.